The sequence spans 207 residues: Protein lin-7 homolog B (207 aa).

The short motif at 1–13 is the Kinase interacting site element; the sequence is MAALVEPLGLERD. Residues 10–65 form the L27 domain; sequence LERDVSRAVELLERLQRSGELPPQKLQALQRVLQSRFCSAIREVYEQLYDTLDITG. The PDZ domain maps to 93-175; the sequence is VVELPKTDEG…SVKLVVRYTP (83 aa). Positions 187-207 are disordered; sequence KMRSARRRQQHHSYTSLESRG. Polar residues predominate over residues 198-207; the sequence is HSYTSLESRG.

This sequence belongs to the lin-7 family. As to quaternary structure, forms a complex with CASK and CASKIN1. Component of the brain-specific heterotrimeric complex (LIN-10-LIN-2-LIN-7 complex) composed of at least APBA1, CASK, and LIN7, which associates with the motor protein KIF17 to transport vesicles along microtubules. Forms a heterotrimeric complex composed of MMP5, LIN7B and PATJ; the N-terminal L27 domain of PALS1 interacts with the L27 domain of PATJ and the C-terminal L27 domain of PALS1 interacts with the L27 domain of LIN7B. Forms a heterotrimeric complex with DLG1 and CASK via their L27 domains. Interacts with DLG4 and GRIN2B as well as CDH1 and CTNNB1, the channels KCNJ12/Kir2.2, KCNJ4/Kir2.3 and probably KCNJ2/Kir2.1 and SLC6A12/BGT-1 via its PDZ domain. The association of LIN7A with cadherin and beta-catenin is calcium-dependent, occurs at synaptic junctions and requires the actin cytoskeleton. Interacts with EGFR, ERBB2, ERBB3 and ERBB4 with both PDZ and KID domains. Associates with KIF17 via APBA1. Interacts with ASIC3. Interacts with TOPK. Interacts with RTKN. Interacts with APBA1. Interacts with MPP7. Interacts with DLG2. Interacts with DLG3. Expressed in the kidney; predominantly in the vasa recta.

The protein localises to the cell membrane. The protein resides in the basolateral cell membrane. It localises to the cell junction. Its subcellular location is the postsynaptic density membrane. It is found in the tight junction. In terms of biological role, plays a role in establishing and maintaining the asymmetric distribution of channels and receptors at the plasma membrane of polarized cells. Forms membrane-associated multiprotein complexes that may regulate delivery and recycling of proteins to the correct membrane domains. The tripartite complex composed of LIN7 (LIN7A, LIN7B or LIN7C), CASK and APBA1 associates with the motor protein KIF17 to transport vesicles containing N-methyl-D-aspartate (NMDA) receptor subunit NR2B along microtubules. This complex may have the potential to couple synaptic vesicle exocytosis to cell adhesion in brain. Ensures the proper localization of GRIN2B (subunit 2B of the NMDA receptor) to neuronal postsynaptic density and may function in localizing synaptic vesicles at synapses where it is recruited by beta-catenin and cadherin. Required to localize Kir2 channels, GABA transporter (SLC6A12) and EGFR/ERBB1, ERBB2, ERBB3 and ERBB4 to the basolateral membrane of epithelial cells. May increase the amplitude of ASIC3 acid-evoked currents by stabilizing the channel at the cell surface. In Mus musculus (Mouse), this protein is Protein lin-7 homolog B (Lin7b).